The following is a 162-amino-acid chain: Transcriptional repressor NrdR (162 aa).

A zinc finger spans residues 3-34 (CPYCHHTDSRVLESRSAEGGQSIRRRRECLAC). The ATP-cone domain occupies 49-139 (ITVIKRNGDR…VYRQFQGISD (91 aa)).

Belongs to the NrdR family. It depends on Zn(2+) as a cofactor.

In terms of biological role, negatively regulates transcription of bacterial ribonucleotide reductase nrd genes and operons by binding to NrdR-boxes. This Thermosynechococcus vestitus (strain NIES-2133 / IAM M-273 / BP-1) protein is Transcriptional repressor NrdR.